A 310-amino-acid chain; its full sequence is Oxygen-dependent coproporphyrinogen-III oxidase (310 aa).

Residue Ser97 participates in substrate binding. His101 and His111 together coordinate a divalent metal cation. The Proton donor role is filled by His111. A substrate-binding site is contributed by 113 to 115 (NFR). Residues His150 and His180 each contribute to the a divalent metal cation site. An important for dimerization region spans residues 245 to 280 (YVEFNLLYDRGTRFGLEFGGRTESILMSLPPRVVWR). 263 to 265 (GGR) serves as a coordination point for substrate.

It belongs to the aerobic coproporphyrinogen-III oxidase family. Homodimer. A divalent metal cation is required as a cofactor.

Its subcellular location is the cytoplasm. The enzyme catalyses coproporphyrinogen III + O2 + 2 H(+) = protoporphyrinogen IX + 2 CO2 + 2 H2O. It participates in porphyrin-containing compound metabolism; protoporphyrin-IX biosynthesis; protoporphyrinogen-IX from coproporphyrinogen-III (O2 route): step 1/1. Its function is as follows. Involved in the heme biosynthesis. Catalyzes the aerobic oxidative decarboxylation of propionate groups of rings A and B of coproporphyrinogen-III to yield the vinyl groups in protoporphyrinogen-IX. The chain is Oxygen-dependent coproporphyrinogen-III oxidase from Coxiella burnetii (strain RSA 493 / Nine Mile phase I).